A 1025-amino-acid polypeptide reads, in one-letter code: MGVPCIVMRLILVSALLVSVSLEHSDMVCAQTIRLTEETDKQALLEFKSQVSETSRVVLGSWNDSLPLCSWTGVKCGLKHRRVTGVDLGGLKLTGVVSPFVGNLSFLRSLNLADNFFHGAIPSEVGNLFRLQYLNMSNNLFGGVIPVVLSNCSSLSTLDLSSNHLEQGVPLEFGSLSKLVLLSLGRNNLTGKFPASLGNLTSLQMLDFIYNQIEGEIPGDIARLKQMIFFRIALNKFNGVFPPPIYNLSSLIFLSITGNSFSGTLRPDFGSLLPNLQILYMGINSFTGTIPETLSNISSLRQLDIPSNHLTGKIPLSFGRLQNLLLLGLNNNSLGNYSSGDLDFLGALTNCSQLQYLNVGFNKLGGQLPVFIANLSTQLTELSLGGNLISGSIPHGIGNLVSLQTLDLGENLLTGKLPPSLGELSELRKVLLYSNGLSGEIPSSLGNISGLTYLYLLNNSFEGSIPSSLGSCSYLLDLNLGTNKLNGSIPHELMELPSLVVLNVSFNLLVGPLRQDIGKLKFLLALDVSYNKLSGQIPQTLANCLSLEFLLLQGNSFVGPIPDIRGLTGLRFLDLSKNNLSGTIPEYMANFSKLQNLNLSLNNFDGAVPTEGVFRNTSAMSVFGNINLCGGIPSLQLQPCSVELPRRHSSVRKIITICVSAVMAALLLLCLCVVYLCWYKLRVKSVRANNNENDRSFSPVKSFYEKISYDELYKTTGGFSSSNLIGSGNFGAVFKGFLGSKNKAVAIKVLNLCKRGAAKSFIAECEALGGIRHRNLVKLVTICSSSDFEGNDFRALVYEFMPNGNLDMWLHPDEIEETGNPSRTLGLFARLNIAIDVASALVYLHTYCHNPIAHCDIKPSNILLDKDLTAHVSDFGLAQLLLKFDRDTFHIQFSSAGVRGTIGYAAPEYGMGGHPSIMGDVYSFGIVLLEIFTGKRPTNKLFVDGLTLHSFTKSALQKRQALDITDETILRGAYAQHFNMVECLTLVFRVGVSCSEESPVNRISMAEAISKLVSIRESFFRDEET.

A signal peptide spans 1–30 (MGVPCIVMRLILVSALLVSVSLEHSDMVCA). The Extracellular portion of the chain corresponds to 31-653 (QTIRLTEETD…LPRRHSSVRK (623 aa)). 2 N-linked (GlcNAc...) asparagine glycosylation sites follow: N63 and N103. LRR repeat units lie at residues 104 to 128 (LSFLRSLNLADNFFHGAIPSEVGNL), 130 to 151 (RLQYLNMSNNLFGGVIPVVLSN), 152 to 175 (CSSLSTLDLSSNHLEQGVPLEFGS), 176 to 200 (LSKLVLLSLGRNNLTGKFPASLGNL), 202 to 224 (SLQMLDFIYNQIEGEIPGDIARL), 226 to 248 (QMIFFRIALNKFNGVFPPPIYNL), 249 to 271 (SSLIFLSITGNSFSGTLRPDFGS), 273 to 297 (LPNLQILYMGINSFTGTIPETLSNI), 298 to 323 (SSLRQLDIPSNHLTGKIPLSFGRLQN), and 325 to 344 (LLLGLNNNSLGNYSSGDLDF). Residues N135 and N151 are each glycosylated (N-linked (GlcNAc...) asparagine). N-linked (GlcNAc...) asparagine glycans are attached at residues N188 and N199. N247 carries an N-linked (GlcNAc...) asparagine glycan. A glycan (N-linked (GlcNAc...) asparagine) is linked at N296. 4 N-linked (GlcNAc...) asparagine glycosylation sites follow: N331, N336, N350, and N374. LRR repeat units lie at residues 351–374 (CSQLQYLNVGFNKLGGQLPVFIAN), 376–400 (STQLTELSLGGNLISGSIPHGIGNL), 401–424 (VSLQTLDLGENLLTGKLPPSLGEL), 426–448 (ELRKVLLYSNGLSGEIPSSLGNI), 449–472 (SGLTYLYLLNNSFEGSIPSSLGSC), 473–496 (SYLLDLNLGTNKLNGSIPHELMEL), 498–520 (SLVVLNVSFNLLVGPLRQDIGKL), 521–544 (KFLLALDVSYNKLSGQIPQTLANC), 546–567 (SLEFLLLQGNSFVGPIPDIRGL), 568–593 (TGLRFLDLSKNNLSGTIPEYMANFSK), and 595–616 (QNLNLSLNNFDGAVPTEGVFRN). N-linked (GlcNAc...) asparagine glycosylation is found at N447, N458, N486, and N503. N579, N590, N598, and N616 each carry an N-linked (GlcNAc...) asparagine glycan. A helical transmembrane segment spans residues 654–674 (IITICVSAVMAALLLLCLCVV). Residues 675-1025 (YLCWYKLRVK…RESFFRDEET (351 aa)) are Cytoplasmic-facing. T716 carries the post-translational modification Phosphothreonine. The Protein kinase domain maps to 719 to 1020 (FSSSNLIGSG…KLVSIRESFF (302 aa)). ATP-binding positions include 725–733 (IGSGNFGAV) and K748. Y798 and Y843 each carry phosphotyrosine. The active-site Proton acceptor is D856. Y904 carries the post-translational modification Phosphotyrosine.

The protein belongs to the protein kinase superfamily. Ser/Thr protein kinase family.

The protein resides in the cell membrane. The catalysed reaction is L-seryl-[protein] + ATP = O-phospho-L-seryl-[protein] + ADP + H(+). It carries out the reaction L-threonyl-[protein] + ATP = O-phospho-L-threonyl-[protein] + ADP + H(+). The sequence is that of Putative receptor-like protein kinase At3g47110 from Arabidopsis thaliana (Mouse-ear cress).